A 562-amino-acid chain; its full sequence is Aureusidin synthase (562 aa).

2 cysteine pairs are disulfide-bonded: C71–C86 and C85–C148. H147, H168, H177, H301, H305, and H335 together coordinate Cu cation. A cross-link (2'-(S-cysteinyl)-histidine (Cys-His)) is located at residues 151-168 (CAGAYNQAGFTNLKLQIH).

This sequence belongs to the tyrosinase family. Monomer. Cu(2+) serves as cofactor. In terms of processing, glycosylated. Post-translationally, contains probably N- and C-terminal propeptides. In terms of tissue distribution, expressed in petals. Not detected in stems and leaves.

It localises to the vacuole lumen. The catalysed reaction is 2',4,4',6'-tetrahydroxychalcone 4'-O-beta-D-glucoside + O2 = aureusidin 6-O-beta-glucoside + H2O. The enzyme catalyses 2 2',3,4,4',6'-pentahydroxychalcone 4'-O-beta-D-glucoside + O2 + 2 H(+) = 2 aureusidin 6-O-beta-glucoside + 2 H2O. It catalyses the reaction 2',3,4,4',6'-pentahydroxychalcone 4'-O-beta-D-glucoside + O2 + H(+) = bracteatin 6-O-beta-glucoside + H2O. H(2)O(2) activates the 3-hydroxylation and oxidative cyclization of tetrahydroxychalcone but inhibits reaction with pentahydroxychalcone. Inhibited by phenylthiourea. Involved in the biosynthesis of aurones, plant flavonoids that provide yellow coloration to flowers. Can use tetrahydroxychalcone (THC), pentahydroxychalcone (PHC), THC 4'-glucoside and PHC 4'-glucoside as substrates, but not 2'-hydroxychalcone, 4-hydroxychalcone, PHC 3-glucoside, 2',6'-dihydroxy-4,4'-dimethoxychalcone, naringenin, eriodictyol and 4,4',6-trihydroxyaurone. Can also produce bracteatin from PHC. This chain is Aureusidin synthase (AS1), found in Antirrhinum majus (Garden snapdragon).